The following is a 586-amino-acid chain: DNA-directed RNA polymerase subunit beta' (586 aa).

Zn(2+) contacts are provided by Cys64, Cys66, Cys85, and Cys88. The Mg(2+) site is built by Asp448, Asp450, and Asp452.

It belongs to the RNA polymerase beta' chain family. RpoC1 subfamily. In terms of assembly, in plastids the minimal PEP RNA polymerase catalytic core is composed of four subunits: alpha, beta, beta', and beta''. When a (nuclear-encoded) sigma factor is associated with the core the holoenzyme is formed, which can initiate transcription. Requires Mg(2+) as cofactor. Zn(2+) serves as cofactor.

Its subcellular location is the plastid. It is found in the chloroplast. It carries out the reaction RNA(n) + a ribonucleoside 5'-triphosphate = RNA(n+1) + diphosphate. In terms of biological role, DNA-dependent RNA polymerase catalyzes the transcription of DNA into RNA using the four ribonucleoside triphosphates as substrates. The sequence is that of DNA-directed RNA polymerase subunit beta' from Euglena gracilis.